Reading from the N-terminus, the 338-residue chain is 1-aminocyclopropane-1-carboxylate deaminase (338 aa).

Lys51 is subject to N6-(pyridoxal phosphate)lysine. The active-site Nucleophile is the Ser78.

This sequence belongs to the ACC deaminase/D-cysteine desulfhydrase family. Homotrimer. Pyridoxal 5'-phosphate is required as a cofactor.

The enzyme catalyses 1-aminocyclopropane-1-carboxylate + H2O = 2-oxobutanoate + NH4(+). Its function is as follows. Catalyzes a cyclopropane ring-opening reaction, the irreversible conversion of 1-aminocyclopropane-1-carboxylate (ACC) to ammonia and alpha-ketobutyrate. Allows growth on ACC as a nitrogen source. The protein is 1-aminocyclopropane-1-carboxylate deaminase of Paraburkholderia phytofirmans (strain DSM 17436 / LMG 22146 / PsJN) (Burkholderia phytofirmans).